A 722-amino-acid polypeptide reads, in one-letter code: Formin-like protein 16 (722 aa).

Disordered stretches follow at residues 1 to 56 (MSPV…PMFD), 564 to 606 (ATED…PSRP), 635 to 672 (VGSP…HLSH), and 690 to 722 (PLLV…LRYQ). Residues 22–55 (PLPPPPPPPMRRSAPSPPPMSGRVPPPPPPPPMF) show a composition bias toward pro residues. The 390-residue stretch at 182–571 (FRCPVTKRSS…KAATEDVFGG (390 aa)) folds into the FH2 domain. Pro residues-rich tracts occupy residues 593 to 605 (IRPP…PPSR), 638 to 658 (PSPP…PPPM), and 709 to 722 (APPP…LRYQ).

Belongs to the formin-like family. Class-II subfamily.

The protein is Formin-like protein 16 (FH16) of Arabidopsis thaliana (Mouse-ear cress).